We begin with the raw amino-acid sequence, 390 residues long: Neuromedin-B receptor (390 aa).

At 1 to 41 the chain is on the extracellular side; it reads MPPRSLSNLSFPTEANESELVPEVWEKDFLPDSDGTTAELV. Asn8 and Asn16 each carry an N-linked (GlcNAc...) asparagine glycan. The chain crosses the membrane as a helical span at residues 42 to 65; it reads IRCVIPSLYLIIISVGLLGNIMLV. The Cytoplasmic segment spans residues 66-79; it reads KIFLTNSAMRNVPN. A helical transmembrane segment spans residues 80 to 99; the sequence is IFISNLAAGDLLLLLTCVPV. Over 100 to 117 the chain is Extracellular; that stretch reads DASRYFFDEWVFGKLGCK. The cysteines at positions 116 and 198 are disulfide-linked. Residues 118 to 139 form a helical membrane-spanning segment; it reads LIPAIQLTSVGVSVFTLTALSA. At 140 to 156 the chain is on the cytoplasmic side; the sequence is DRYRAIVNPMDMQTSGV. A helical membrane pass occupies residues 157 to 177; it reads LLWTSLKAVGIWVVSVLLAVP. The Extracellular segment spans residues 178–211; it reads EAVFSEVARIGSLDNSSFTACIPYPQTDELHPKI. Residue Asn192 is glycosylated (N-linked (GlcNAc...) asparagine). A helical membrane pass occupies residues 212–235; that stretch reads HSVLIFLVYFLIPLVIISIYYYHI. Topologically, residues 236–266 are cytoplasmic; the sequence is AKTLIKSAHNLPGEYNEHTKKQMETRKRLAK. Residues 267–287 traverse the membrane as a helical segment; that stretch reads IVLVFVGCFVFCWFPNHVLYL. At 288–299 the chain is on the extracellular side; the sequence is YRSFNYKEIDPS. Residues 300 to 327 traverse the membrane as a helical segment; the sequence is LGHMIVTLVARVLSFSNSCVNPFALYLL. Topologically, residues 328–390 are cytoplasmic; sequence SESFRKHFNS…GHSTKQEIAL (63 aa). A lipid anchor (S-palmitoyl cysteine) is attached at Cys341. At Ser352 the chain carries Phosphoserine.

It belongs to the G-protein coupled receptor 1 family. Expressed in a subset of neurons of the pre-Botzinger complex. Within the pre-Botzinger complex, there is some overlap with neurons expressing Grpr with some cells expressing only Grpr or Nmbr while some cells express both. Expressed in dorsal root ganglion neurons and mast cells. Expressed in lung.

It is found in the cell membrane. Its function is as follows. Receptor for neuromedin-B. Contributes to the maintenance of basal sigh rate through signaling in the pre-Botzinger complex, a cluster of several thousand neurons in the ventrolateral medulla responsible for inspiration during respiratory activity. Contributes to the induction of sneezing following exposure to chemical irritants or allergens which causes release of NMB by nasal sensory neurons and activation of NMBR-expressing neurons in the sneeze-evoking region of the brainstem. These in turn activate neurons of the caudal ventral respiratory group, giving rise to the sneezing response. Contributes to induction of acute itch, possibly through its activation on dorsal root ganglion neurons by the NMB peptide. Plays a role in the innate immune response to influenza A virus infection by enhancing interferon alpha expression and reducing expression of IL6. Plays a role in CSF1-induced proliferation of osteoclast precursors by contributing to the positive regulation of the expression of the CSF1 receptor CSF1R. This chain is Neuromedin-B receptor (Nmbr), found in Mus musculus (Mouse).